Here is a 474-residue protein sequence, read N- to C-terminus: Adenosylhomocysteinase (474 aa).

Residues threonine 61, aspartate 136, and glutamate 196 each coordinate substrate. Residue 197–199 (TTT) participates in NAD(+) binding. Residues lysine 226 and aspartate 230 each contribute to the substrate site. Residues asparagine 231, 260–265 (GYGDVG), glutamate 283, asparagine 318, 339–341 (IGH), and asparagine 384 contribute to the NAD(+) site.

The protein belongs to the adenosylhomocysteinase family. Requires NAD(+) as cofactor.

The protein resides in the cytoplasm. The catalysed reaction is S-adenosyl-L-homocysteine + H2O = L-homocysteine + adenosine. It functions in the pathway amino-acid biosynthesis; L-homocysteine biosynthesis; L-homocysteine from S-adenosyl-L-homocysteine: step 1/1. May play a key role in the regulation of the intracellular concentration of adenosylhomocysteine. The chain is Adenosylhomocysteinase from Ralstonia nicotianae (strain ATCC BAA-1114 / GMI1000) (Ralstonia solanacearum).